The chain runs to 220 residues: Deoxyribose-phosphate aldolase 2 (220 aa).

Aspartate 89 functions as the Proton donor/acceptor in the catalytic mechanism. Residue lysine 151 is the Schiff-base intermediate with acetaldehyde of the active site. The active-site Proton donor/acceptor is the lysine 180.

Belongs to the DeoC/FbaB aldolase family. DeoC type 1 subfamily.

The protein resides in the cytoplasm. It catalyses the reaction 2-deoxy-D-ribose 5-phosphate = D-glyceraldehyde 3-phosphate + acetaldehyde. It participates in carbohydrate degradation; 2-deoxy-D-ribose 1-phosphate degradation; D-glyceraldehyde 3-phosphate and acetaldehyde from 2-deoxy-alpha-D-ribose 1-phosphate: step 2/2. Its function is as follows. Catalyzes a reversible aldol reaction between acetaldehyde and D-glyceraldehyde 3-phosphate to generate 2-deoxy-D-ribose 5-phosphate. The protein is Deoxyribose-phosphate aldolase 2 of Staphylococcus aureus (strain MSSA476).